The sequence spans 97 residues: MARSVWKGPFVEESLIKKVEKQKLDPKKMPIKTWSRKSTIIPEFIGVSFLIYNGKKFIPVTISEDMVGHKLGEFSPTRTFFGHTPAEKKGKPAEKKK.

This sequence belongs to the universal ribosomal protein uS19 family.

In terms of biological role, protein S19 forms a complex with S13 that binds strongly to the 16S ribosomal RNA. The sequence is that of Small ribosomal subunit protein uS19 from Pelagibacter ubique (strain HTCC1062).